Reading from the N-terminus, the 705-residue chain is MSEQKAFNLKIDEQNIAWLGIDVPNEKMNTLQAAFADEMKAIFAQLKDSSGLKGLIVHSLKPDNFVAGADVRMLEACKTAPEAEALARQGQELFQQLSDLPYPVVAAIHGPCLGGGLELALACDFRVCSDDDATRLGLPEVQLGLLPGSGGTQRLPRLIGLLPSLDLILTGKQLRANKAKKLGVVDACVPQTILLDVAKQFVEKGKKRAKQKVTTKEKLLSGSGLGRKFVFEQAAKKTHEKTRGNYPATVAILQVIQHGLEKGMKQGLELEAKRFGELVMSNESKALRSIFFATTEMKKETGSEAKPSKVGMVGVLGGGLMGAGISHVSVAKAKVPVRIKDVSNDGVLNALKYNYKLFDKQRKRRILSKAQLQSKMLQLSGGTDFTSFNRTDVVIEAVFEDLSLKQQMVADIEANAKPETIFATNTSSLPIHKIAEKAQRPENIVGLHYFSPVEKMPLVEVIPHESTSEETIATVVALAKKQGKTPIVVKDQAGFYVNRILAPYMNESAHILLANEPIDKIDTALLDFGFPVGPITLLDEVGVDIGAKIMPILVAELGARFKGPDVFDVLLNDGRKGRKSGKGFYTYKGKKKEVDKSVYKLLKLTPESKLSDNDIALRCVLPMLNEAVRCLDDGIIRSPRDGDIGAIFGIGFPPFLGGPFRYMDQFGLKELVEKMNQFAEKYGDRFAPCDGLLTRAGEGRRFYDN.

The enoyl-CoA hydratase stretch occupies residues 1 to 190 (MSEQKAFNLK…KLGVVDACVP (190 aa)). Residues 308–705 (SKVGMVGVLG…AGEGRRFYDN (398 aa)) are 3-hydroxyacyl-CoA dehydrogenase.

It in the N-terminal section; belongs to the enoyl-CoA hydratase/isomerase family. The protein in the central section; belongs to the 3-hydroxyacyl-CoA dehydrogenase family. Heterotetramer of two alpha chains (FadJ) and two beta chains (FadI).

It localises to the cytoplasm. It carries out the reaction a (3S)-3-hydroxyacyl-CoA = a (2E)-enoyl-CoA + H2O. It catalyses the reaction a 4-saturated-(3S)-3-hydroxyacyl-CoA = a (3E)-enoyl-CoA + H2O. The catalysed reaction is a (3S)-3-hydroxyacyl-CoA + NAD(+) = a 3-oxoacyl-CoA + NADH + H(+). The enzyme catalyses (3S)-3-hydroxybutanoyl-CoA = (3R)-3-hydroxybutanoyl-CoA. It functions in the pathway lipid metabolism; fatty acid beta-oxidation. Catalyzes the formation of a hydroxyacyl-CoA by addition of water on enoyl-CoA. Also exhibits 3-hydroxyacyl-CoA epimerase and 3-hydroxyacyl-CoA dehydrogenase activities. This Vibrio vulnificus (strain CMCP6) protein is Fatty acid oxidation complex subunit alpha.